A 354-amino-acid chain; its full sequence is Photosystem II protein D1 1 (354 aa).

3 consecutive transmembrane segments (helical) span residues 29–46 (YIGWFGVLMIPTLLTATT), 118–133 (HFLIGVFCYMGREWEL), and 142–156 (WIAVAYSAPVAAATA). His118 lines the chlorophyll a pocket. Pheophytin a is bound at residue Tyr126. [CaMn4O5] cluster is bound by residues Asp170 and Glu189. The helical transmembrane segment at 197 to 218 (FHQLGVAGVFGGALFSAMHGSL) threads the bilayer. Residue His198 participates in chlorophyll a binding. A quinone contacts are provided by residues His215 and 264–265 (SF). His215 contacts Fe cation. Residue His272 coordinates Fe cation. The chain crosses the membrane as a helical span at residues 274–288 (FLAAWPVIGIWFTAL). [CaMn4O5] cluster-binding residues include His332, Glu333, Asp342, and Ala344. The propeptide occupies 345–354 (AVEVAPAIRG).

This sequence belongs to the reaction center PufL/M/PsbA/D family. PSII is composed of 1 copy each of membrane proteins PsbA, PsbB, PsbC, PsbD, PsbE, PsbF, PsbH, PsbI, PsbJ, PsbK, PsbL, PsbM, PsbT, PsbX, PsbY, PsbZ, Psb30/Ycf12, peripheral proteins PsbO, CyanoQ (PsbQ), PsbU, PsbV and a large number of cofactors. It forms dimeric complexes. The D1/D2 heterodimer binds P680, chlorophylls that are the primary electron donor of PSII, and subsequent electron acceptors. It shares a non-heme iron and each subunit binds pheophytin, quinone, additional chlorophylls, carotenoids and lipids. D1 provides most of the ligands for the Mn4-Ca-O5 cluster of the oxygen-evolving complex (OEC). There is also a Cl(-1) ion associated with D1 and D2, which is required for oxygen evolution. The PSII complex binds additional chlorophylls, carotenoids and specific lipids. serves as cofactor. Post-translationally, tyr-161 forms a radical intermediate that is referred to as redox-active TyrZ, YZ or Y-Z. C-terminally processed by CtpA; processing is essential to allow assembly of the oxygen-evolving complex and thus photosynthetic growth.

Its subcellular location is the cellular thylakoid membrane. The enzyme catalyses 2 a plastoquinone + 4 hnu + 2 H2O = 2 a plastoquinol + O2. In terms of biological role, photosystem II (PSII) is a light-driven water:plastoquinone oxidoreductase that uses light energy to abstract electrons from H(2)O, generating O(2) and a proton gradient subsequently used for ATP formation. It consists of a core antenna complex that captures photons, and an electron transfer chain that converts photonic excitation into a charge separation. The D1/D2 (PsbA/PsbD) reaction center heterodimer binds P680, the primary electron donor of PSII as well as several subsequent electron acceptors. The chain is Photosystem II protein D1 1 from Synechococcus sp. (strain JA-3-3Ab) (Cyanobacteria bacterium Yellowstone A-Prime).